A 114-amino-acid chain; its full sequence is Ig heavy chain V-A2 region BS-1 (114 aa).

Pyrrolidone carboxylic acid is present on Q1. The 107-residue stretch at 1 to 107 folds into the Ig-like domain; sequence QSVKESEGGL…YLGLMDVWGP (107 aa).

The protein is Ig heavy chain V-A2 region BS-1 of Oryctolagus cuniculus (Rabbit).